A 693-amino-acid polypeptide reads, in one-letter code: Phosphoribosylformylglycinamidine synthase subunit PurL (693 aa).

Residue His-34 is part of the active site. ATP is bound by residues Tyr-37 and Lys-76. Mg(2+) is bound at residue Glu-78. Substrate contacts are provided by residues 79–82 (SHNH) and Arg-101. The Proton acceptor role is filled by His-80. Asp-102 is a Mg(2+) binding site. Gln-222 provides a ligand contact to substrate. Asp-248 is a Mg(2+) binding site. 292–294 (ETQ) contributes to the substrate binding site. 2 residues coordinate ATP: Asp-470 and Gly-507. Ser-510 lines the substrate pocket.

The protein belongs to the FGAMS family. Monomer. Part of the FGAM synthase complex composed of 1 PurL, 1 PurQ and 2 PurS subunits.

The protein resides in the cytoplasm. It carries out the reaction N(2)-formyl-N(1)-(5-phospho-beta-D-ribosyl)glycinamide + L-glutamine + ATP + H2O = 2-formamido-N(1)-(5-O-phospho-beta-D-ribosyl)acetamidine + L-glutamate + ADP + phosphate + H(+). It participates in purine metabolism; IMP biosynthesis via de novo pathway; 5-amino-1-(5-phospho-D-ribosyl)imidazole from N(2)-formyl-N(1)-(5-phospho-D-ribosyl)glycinamide: step 1/2. Functionally, part of the phosphoribosylformylglycinamidine synthase complex involved in the purines biosynthetic pathway. Catalyzes the ATP-dependent conversion of formylglycinamide ribonucleotide (FGAR) and glutamine to yield formylglycinamidine ribonucleotide (FGAM) and glutamate. The FGAM synthase complex is composed of three subunits. PurQ produces an ammonia molecule by converting glutamine to glutamate. PurL transfers the ammonia molecule to FGAR to form FGAM in an ATP-dependent manner. PurS interacts with PurQ and PurL and is thought to assist in the transfer of the ammonia molecule from PurQ to PurL. The sequence is that of Phosphoribosylformylglycinamidine synthase subunit PurL from Pyrobaculum calidifontis (strain DSM 21063 / JCM 11548 / VA1).